A 307-amino-acid chain; its full sequence is Transcription initiation factor IIB (307 aa).

The TFIIB-type zinc-finger motif lies at 11-42 (FTEECPACGSAEIVFDEERGEYVCANCGLVTE). Zn(2+) contacts are provided by C15, C18, C34, and C37. Residues 48 to 69 (PGPEWRHFNPDQRQRRSRTGEP) form a disordered region. Residues 50-69 (PEWRHFNPDQRQRRSRTGEP) are compositionally biased toward basic and acidic residues. Tandem repeats lie at residues 123–207 (LELE…QRRL) and 218–299 (DHLP…EICE).

This sequence belongs to the TFIIB family.

Functionally, stabilizes TBP binding to an archaeal box-A promoter. Also responsible for recruiting RNA polymerase II to the pre-initiation complex (DNA-TBP-TFIIB). This is Transcription initiation factor IIB from Methanopyrus kandleri (strain AV19 / DSM 6324 / JCM 9639 / NBRC 100938).